The primary structure comprises 404 residues: Probable tRNA sulfurtransferase (404 aa).

Residues 60-165 (QPVVEALKLV…DEAAYISYEE (106 aa)) enclose the THUMP domain. ATP-binding positions include 183–184 (ML), 208–209 (HF), Arg-265, Gly-287, and Gln-296.

It belongs to the ThiI family.

The protein resides in the cytoplasm. The enzyme catalyses [ThiI sulfur-carrier protein]-S-sulfanyl-L-cysteine + a uridine in tRNA + 2 reduced [2Fe-2S]-[ferredoxin] + ATP + H(+) = [ThiI sulfur-carrier protein]-L-cysteine + a 4-thiouridine in tRNA + 2 oxidized [2Fe-2S]-[ferredoxin] + AMP + diphosphate. It carries out the reaction [ThiS sulfur-carrier protein]-C-terminal Gly-Gly-AMP + S-sulfanyl-L-cysteinyl-[cysteine desulfurase] + AH2 = [ThiS sulfur-carrier protein]-C-terminal-Gly-aminoethanethioate + L-cysteinyl-[cysteine desulfurase] + A + AMP + 2 H(+). It participates in cofactor biosynthesis; thiamine diphosphate biosynthesis. Functionally, catalyzes the ATP-dependent transfer of a sulfur to tRNA to produce 4-thiouridine in position 8 of tRNAs, which functions as a near-UV photosensor. Also catalyzes the transfer of sulfur to the sulfur carrier protein ThiS, forming ThiS-thiocarboxylate. This is a step in the synthesis of thiazole, in the thiamine biosynthesis pathway. The sulfur is donated as persulfide by IscS. This Streptococcus pyogenes serotype M5 (strain Manfredo) protein is Probable tRNA sulfurtransferase.